Here is a 445-residue protein sequence, read N- to C-terminus: Exodeoxyribonuclease 7 large subunit (445 aa).

It belongs to the XseA family. Heterooligomer composed of large and small subunits.

It localises to the cytoplasm. The enzyme catalyses Exonucleolytic cleavage in either 5'- to 3'- or 3'- to 5'-direction to yield nucleoside 5'-phosphates.. In terms of biological role, bidirectionally degrades single-stranded DNA into large acid-insoluble oligonucleotides, which are then degraded further into small acid-soluble oligonucleotides. This Limosilactobacillus reuteri (strain DSM 20016) (Lactobacillus reuteri) protein is Exodeoxyribonuclease 7 large subunit.